We begin with the raw amino-acid sequence, 249 residues long: 5'-nucleotidase SurE (249 aa).

Residues aspartate 9, aspartate 10, serine 40, and asparagine 92 each contribute to the a divalent metal cation site.

Belongs to the SurE nucleotidase family. A divalent metal cation serves as cofactor.

The protein resides in the cytoplasm. The enzyme catalyses a ribonucleoside 5'-phosphate + H2O = a ribonucleoside + phosphate. Functionally, nucleotidase that shows phosphatase activity on nucleoside 5'-monophosphates. The polypeptide is 5'-nucleotidase SurE (Shewanella sediminis (strain HAW-EB3)).